The following is a 240-amino-acid chain: Uridylate kinase (240 aa).

12 to 15 (KLSG) is an ATP binding site. Residues 20–25 (GDKGFG) are involved in allosteric activation by GTP. G54 is a binding site for UMP. Positions 55 and 59 each coordinate ATP. Residues D74 and 135-142 (TGSPYFST) each bind UMP. ATP is bound by residues N163, Y169, and D172.

The protein belongs to the UMP kinase family. Homohexamer.

The protein localises to the cytoplasm. It carries out the reaction UMP + ATP = UDP + ADP. The protein operates within pyrimidine metabolism; CTP biosynthesis via de novo pathway; UDP from UMP (UMPK route): step 1/1. Allosterically activated by GTP. Inhibited by UTP. In terms of biological role, catalyzes the reversible phosphorylation of UMP to UDP. This is Uridylate kinase from Limosilactobacillus reuteri (strain DSM 20016) (Lactobacillus reuteri).